The primary structure comprises 361 residues: Chorismate synthase (361 aa).

Arg-48 is a binding site for NADP(+). Residues Arg-125–Ser-127, Asn-238–Ala-239, Gly-278, Lys-293–Ser-297, and Arg-319 each bind FMN.

The protein belongs to the chorismate synthase family. Homotetramer. It depends on FMNH2 as a cofactor.

The enzyme catalyses 5-O-(1-carboxyvinyl)-3-phosphoshikimate = chorismate + phosphate. Its pathway is metabolic intermediate biosynthesis; chorismate biosynthesis; chorismate from D-erythrose 4-phosphate and phosphoenolpyruvate: step 7/7. Functionally, catalyzes the anti-1,4-elimination of the C-3 phosphate and the C-6 proR hydrogen from 5-enolpyruvylshikimate-3-phosphate (EPSP) to yield chorismate, which is the branch point compound that serves as the starting substrate for the three terminal pathways of aromatic amino acid biosynthesis. This reaction introduces a second double bond into the aromatic ring system. The polypeptide is Chorismate synthase (Aliivibrio fischeri (strain MJ11) (Vibrio fischeri)).